Reading from the N-terminus, the 534-residue chain is MIWYILIIGILLPQSLAHPGFFTSIGQMTDLIHTEKDLVTSLKDYIKAEEDKLEQIKKWAEKLDRLTSTATKDPEGFVGHPVNAFKLMKRLNTEWSELENLVLKDMSDGFISNLTIQRQYFPNDEDQVGAAKALLRLQDTYNLDTDTISKGNLPGVKHKSFLTAEDCFELGKVAYTEADYYHTELWMEQALRQLDEGEISTIDKVSVLDYLSYAVYQQGDLDKALLLTKKLLELDPEHQRANGNLKYFEYIMAKEKDVNKSASDDQSDQKTTPKKKGVAVDYLPERQKYEMLCRGEGIKMTPRRQKKLFCRYHDGNRNPKFILAPAKQEDEWDKPRIIRFHDIISDAEIEIVKDLAKPRLRRATISNPITGDLETVHYRISKSAWLSGYENPVVSRINMRIQDLTGLDVSTAEELQVANYGVGGQYEPHFDFARKDEPDAFKELGTGNRIATWLFYMSDVSAGGATVFPEVGASVWPKKGTAVFWYNLFASGEGDYSTRHAACPVLVGNKWVSNKWLHERGQEFRRPCTLSELE.

The first 17 residues, 1 to 17 (MIWYILIIGILLPQSLA), serve as a signal peptide directing secretion. The N-linked (GlcNAc...) asparagine glycan is linked to N113. A TPR repeat occupies 205–238 (VSVLDYLSYAVYQQGDLDKALLLTKKLLELDPEH). N-linked (GlcNAc...) asparagine glycosylation occurs at N259. Residues 411–519 (TAEELQVANY…KWVSNKWLHE (109 aa)) enclose the Fe2OG dioxygenase domain. 3 residues coordinate Fe cation: H429, D431, and H500. K510 is a 2-oxoglutarate binding site.

It belongs to the P4HA family. Heterotetramer of two alpha-1 chains and two beta chains (P4HB)(the beta chain is the multi-functional PDI), where P4HB plays the role of a structural subunit; this tetramer catalyzes the formation of 4-hydroxyproline in collagen. The cofactor is Fe(2+). It depends on L-ascorbate as a cofactor. In terms of tissue distribution, expressed in the heart, liver, skeletal muscle, kidney, placenta, lung and pancreas.

Its subcellular location is the endoplasmic reticulum lumen. It catalyses the reaction L-prolyl-[collagen] + 2-oxoglutarate + O2 = trans-4-hydroxy-L-prolyl-[collagen] + succinate + CO2. With respect to regulation, inhibited by poly(L-proline). Functionally, catalyzes the post-translational formation of 4-hydroxyproline in -Xaa-Pro-Gly- sequences in collagens and other proteins. The chain is Prolyl 4-hydroxylase subunit alpha-1 (P4HA1) from Homo sapiens (Human).